Here is a 678-residue protein sequence, read N- to C-terminus: Exoribonuclease 2 (678 aa).

The 329-residue stretch at Arg-193–Ile-521 folds into the RNB domain. The S1 motif domain occupies Glu-568–Thr-650. The tract at residues Glu-659–Val-678 is disordered.

The protein belongs to the RNR ribonuclease family. RNase II subfamily.

It is found in the cytoplasm. The enzyme catalyses Exonucleolytic cleavage in the 3'- to 5'-direction to yield nucleoside 5'-phosphates.. Its function is as follows. Involved in mRNA degradation. Hydrolyzes single-stranded polyribonucleotides processively in the 3' to 5' direction. In Vibrio cholerae serotype O1 (strain ATCC 39315 / El Tor Inaba N16961), this protein is Exoribonuclease 2.